The chain runs to 751 residues: Photosystem I P700 chlorophyll a apoprotein A1 (751 aa).

Transmembrane regions (helical) follow at residues 73–96 (VFSA…FHGA), 159–182 (LYIT…FHYH), 198–222 (LNHH…HVSL), 294–312 (VAHH…GHMY), 349–372 (WHAQ…QHMY), 388–414 (LSLF…IFMV), 436–458 (AIIS…LYIH), and 533–551 (FLVH…LILL). [4Fe-4S] cluster-binding residues include cysteine 575 and cysteine 584. The next 2 helical transmembrane spans lie at 591 to 612 (HVFL…HFSW) and 665 to 687 (LSAY…MFLF). Residue histidine 676 coordinates chlorophyll a'. Chlorophyll a contacts are provided by methionine 684 and tyrosine 692. Tryptophan 693 is a binding site for phylloquinone. The helical transmembrane segment at 725–745 (AVGVAHYLLGGIATTWSFFLA) threads the bilayer.

Belongs to the PsaA/PsaB family. As to quaternary structure, the PsaA/B heterodimer binds the P700 chlorophyll special pair and subsequent electron acceptors. PSI consists of a core antenna complex that captures photons, and an electron transfer chain that converts photonic excitation into a charge separation. The eukaryotic PSI reaction center is composed of at least 11 subunits. Requires P700 is a chlorophyll a/chlorophyll a' dimer, A0 is one or more chlorophyll a, A1 is one or both phylloquinones and FX is a shared 4Fe-4S iron-sulfur center. as cofactor.

It localises to the plastid. The protein resides in the chloroplast thylakoid membrane. The catalysed reaction is reduced [plastocyanin] + hnu + oxidized [2Fe-2S]-[ferredoxin] = oxidized [plastocyanin] + reduced [2Fe-2S]-[ferredoxin]. PsaA and PsaB bind P700, the primary electron donor of photosystem I (PSI), as well as the electron acceptors A0, A1 and FX. PSI is a plastocyanin/cytochrome c6-ferredoxin oxidoreductase, converting photonic excitation into a charge separation, which transfers an electron from the donor P700 chlorophyll pair to the spectroscopically characterized acceptors A0, A1, FX, FA and FB in turn. Oxidized P700 is reduced on the lumenal side of the thylakoid membrane by plastocyanin or cytochrome c6. The sequence is that of Photosystem I P700 chlorophyll a apoprotein A1 from Euglena gracilis.